The sequence spans 614 residues: RNA polymerase sigma factor RpoD (614 aa).

The segment at threonine 178–phenylalanine 222 is disordered. Residues glutamine 186–serine 198 show a composition bias toward basic and acidic residues. The span at lysine 199–glutamate 208 shows a compositional bias: acidic residues. Residues glycine 209–phenylalanine 222 show a composition bias toward basic and acidic residues. Positions methionine 380–threonine 450 are sigma-70 factor domain-2. The Interaction with polymerase core subunit RpoC motif lies at aspartate 404–glutamine 407. Positions glutamate 459 to serine 535 are sigma-70 factor domain-3. The segment at valine 548–histidine 601 is sigma-70 factor domain-4. Positions leucine 574–alanine 593 form a DNA-binding region, H-T-H motif.

Belongs to the sigma-70 factor family. RpoD/SigA subfamily. Interacts transiently with the RNA polymerase catalytic core.

The protein localises to the cytoplasm. Sigma factors are initiation factors that promote the attachment of RNA polymerase to specific initiation sites and are then released. This sigma factor is the primary sigma factor during exponential growth. This Shewanella violacea (strain JCM 10179 / CIP 106290 / LMG 19151 / DSS12) protein is RNA polymerase sigma factor RpoD.